The chain runs to 83 residues: Large ribosomal subunit protein bL31B (83 aa).

This sequence belongs to the bacterial ribosomal protein bL31 family. Type B subfamily. As to quaternary structure, part of the 50S ribosomal subunit.

This is Large ribosomal subunit protein bL31B from Leifsonia xyli subsp. xyli (strain CTCB07).